We begin with the raw amino-acid sequence, 315 residues long: Protein LST8 homolog (315 aa).

8 WD repeats span residues 1 to 31 (MGDQLILATGGYDHTIKVWQAHTGNCIKTMR), 33 to 71 (VETSQVNALDRTPDKTRLAACGYQCIRLYDLESNCTAPV), 76 to 115 (GVQKNVTRLGFQEDGNWMFTAGEDHHVRIWDMISAPPHCS), 119 to 158 (DCESPVNAACLHPNQVEIGMGSQNGNVFLWDVKSEKHECI), 161 to 200 (EVDASIQDVAISPDGHYLAAANNKGNCYIWSLCSSPDQKM), 211 to 250 (AHTRYILRCKFSPDSRLLLTTSGDGTACLWKTSDFSKWRE), 253 to 292 (IENYWVWDAAFSADSKWLFTASSDGVARLWKLETKTPTRE), and 295 to 315 (GHTKAITALSFKDEIIRKVNH).

This sequence belongs to the WD repeat LST8 family.

It is found in the cytoplasm. In Drosophila pseudoobscura pseudoobscura (Fruit fly), this protein is Protein LST8 homolog.